A 222-amino-acid polypeptide reads, in one-letter code: UPF0758 protein Cpar_0627 (222 aa).

The MPN domain occupies 100 to 222 (KIQGAQDVFE…WFSFRDHSLL (123 aa)). H171, H173, and D184 together coordinate Zn(2+). A JAMM motif motif is present at residues 171–184 (HNHPSGDVQPSNAD).

It belongs to the UPF0758 family.

The polypeptide is UPF0758 protein Cpar_0627 (Chlorobaculum parvum (strain DSM 263 / NCIMB 8327) (Chlorobium vibrioforme subsp. thiosulfatophilum)).